Consider the following 162-residue polypeptide: Protein NrdI (162 aa).

The protein belongs to the NrdI family.

Probably involved in ribonucleotide reductase function. The chain is Protein NrdI from Streptococcus pyogenes serotype M2 (strain MGAS10270).